A 494-amino-acid polypeptide reads, in one-letter code: Histidine--tRNA ligase (494 aa).

It belongs to the class-II aminoacyl-tRNA synthetase family. In terms of assembly, homodimer.

It is found in the cytoplasm. It carries out the reaction tRNA(His) + L-histidine + ATP = L-histidyl-tRNA(His) + AMP + diphosphate + H(+). The protein is Histidine--tRNA ligase of Cereibacter sphaeroides (strain ATCC 17023 / DSM 158 / JCM 6121 / CCUG 31486 / LMG 2827 / NBRC 12203 / NCIMB 8253 / ATH 2.4.1.) (Rhodobacter sphaeroides).